Consider the following 555-residue polypeptide: Formate--tetrahydrofolate ligase (555 aa).

Residue T65–S72 coordinates ATP.

It belongs to the formate--tetrahydrofolate ligase family.

The catalysed reaction is (6S)-5,6,7,8-tetrahydrofolate + formate + ATP = (6R)-10-formyltetrahydrofolate + ADP + phosphate. It functions in the pathway one-carbon metabolism; tetrahydrofolate interconversion. The sequence is that of Formate--tetrahydrofolate ligase from Staphylococcus epidermidis (strain ATCC 35984 / DSM 28319 / BCRC 17069 / CCUG 31568 / BM 3577 / RP62A).